The following is a 229-amino-acid chain: Cytochrome c oxidase subunit 2 (229 aa).

Topologically, residues 1–26 (MSTWANLGLQDSASPLMEQLIFFHDH) are mitochondrial intermembrane. Residues 27–48 (ALLILVMITVLVGYLMVMLFFN) form a helical membrane-spanning segment. Residues 49–62 (SYVNRFLLHGQLIE) lie on the Mitochondrial matrix side of the membrane. The helical transmembrane segment at 63-82 (MIWTILPAIILLFIAMPSLR) threads the bilayer. The Mitochondrial intermembrane segment spans residues 83–229 (LLYLLDEINE…IKWISDKVNS (147 aa)). Cu cation is bound by residues H161, C196, E198, C200, H204, and M207. E198 lines the Mg(2+) pocket.

This sequence belongs to the cytochrome c oxidase subunit 2 family. In terms of assembly, component of the cytochrome c oxidase (complex IV, CIV), a multisubunit enzyme composed of a catalytic core of 3 subunits and several supernumerary subunits. The complex exists as a monomer or a dimer and forms supercomplexes (SCs) in the inner mitochondrial membrane with ubiquinol-cytochrome c oxidoreductase (cytochrome b-c1 complex, complex III, CIII). Requires Cu cation as cofactor.

Its subcellular location is the mitochondrion inner membrane. The catalysed reaction is 4 Fe(II)-[cytochrome c] + O2 + 8 H(+)(in) = 4 Fe(III)-[cytochrome c] + 2 H2O + 4 H(+)(out). Functionally, component of the cytochrome c oxidase, the last enzyme in the mitochondrial electron transport chain which drives oxidative phosphorylation. The respiratory chain contains 3 multisubunit complexes succinate dehydrogenase (complex II, CII), ubiquinol-cytochrome c oxidoreductase (cytochrome b-c1 complex, complex III, CIII) and cytochrome c oxidase (complex IV, CIV), that cooperate to transfer electrons derived from NADH and succinate to molecular oxygen, creating an electrochemical gradient over the inner membrane that drives transmembrane transport and the ATP synthase. Cytochrome c oxidase is the component of the respiratory chain that catalyzes the reduction of oxygen to water. Electrons originating from reduced cytochrome c in the intermembrane space (IMS) are transferred via the dinuclear copper A center (CU(A)) of subunit 2 and heme A of subunit 1 to the active site in subunit 1, a binuclear center (BNC) formed by heme A3 and copper B (CU(B)). The BNC reduces molecular oxygen to 2 water molecules using 4 electrons from cytochrome c in the IMS and 4 protons from the mitochondrial matrix. This chain is Cytochrome c oxidase subunit 2 (mt:CoII), found in Drosophila subobscura (Fruit fly).